A 339-amino-acid polypeptide reads, in one-letter code: Ketol-acid reductoisomerase (NADP(+)) (339 aa).

The KARI N-terminal Rossmann domain occupies Met-1 to Thr-182. Residues Tyr-24–Gln-27, Arg-48, Ser-51, Thr-53, and Asp-83–Gln-86 contribute to the NADP(+) site. His-108 is a catalytic residue. Gly-134 serves as a coordination point for NADP(+). The 146-residue stretch at Thr-183–Ile-328 folds into the KARI C-terminal knotted domain. Asp-191, Glu-195, Glu-227, and Glu-231 together coordinate Mg(2+). Residue Ser-252 participates in substrate binding.

It belongs to the ketol-acid reductoisomerase family. It depends on Mg(2+) as a cofactor.

It catalyses the reaction (2R)-2,3-dihydroxy-3-methylbutanoate + NADP(+) = (2S)-2-acetolactate + NADPH + H(+). It carries out the reaction (2R,3R)-2,3-dihydroxy-3-methylpentanoate + NADP(+) = (S)-2-ethyl-2-hydroxy-3-oxobutanoate + NADPH + H(+). It participates in amino-acid biosynthesis; L-isoleucine biosynthesis; L-isoleucine from 2-oxobutanoate: step 2/4. Its pathway is amino-acid biosynthesis; L-valine biosynthesis; L-valine from pyruvate: step 2/4. Its function is as follows. Involved in the biosynthesis of branched-chain amino acids (BCAA). Catalyzes an alkyl-migration followed by a ketol-acid reduction of (S)-2-acetolactate (S2AL) to yield (R)-2,3-dihydroxy-isovalerate. In the isomerase reaction, S2AL is rearranged via a Mg-dependent methyl migration to produce 3-hydroxy-3-methyl-2-ketobutyrate (HMKB). In the reductase reaction, this 2-ketoacid undergoes a metal-dependent reduction by NADPH to yield (R)-2,3-dihydroxy-isovalerate. This Brucella canis (strain ATCC 23365 / NCTC 10854 / RM-666) protein is Ketol-acid reductoisomerase (NADP(+)).